Consider the following 377-residue polypeptide: Probable glucokinase 2 (377 aa).

27 to 32 (CDVGGS) is an ATP binding site.

This sequence belongs to the bacterial glucokinase family.

The catalysed reaction is D-glucose + ATP = D-glucose 6-phosphate + ADP + H(+). In Trichomonas vaginalis, this protein is Probable glucokinase 2 (GK2).